Here is a 140-residue protein sequence, read N- to C-terminus: Nucleoside diphosphate kinase (140 aa).

ATP is bound by residues Lys-11, Phe-59, Arg-87, Thr-93, Arg-104, and Asn-114. The active-site Pros-phosphohistidine intermediate is His-117.

It belongs to the NDK family. In terms of assembly, homotetramer. The cofactor is Mg(2+).

The protein localises to the cytoplasm. The enzyme catalyses a 2'-deoxyribonucleoside 5'-diphosphate + ATP = a 2'-deoxyribonucleoside 5'-triphosphate + ADP. It carries out the reaction a ribonucleoside 5'-diphosphate + ATP = a ribonucleoside 5'-triphosphate + ADP. In terms of biological role, major role in the synthesis of nucleoside triphosphates other than ATP. The ATP gamma phosphate is transferred to the NDP beta phosphate via a ping-pong mechanism, using a phosphorylated active-site intermediate. The polypeptide is Nucleoside diphosphate kinase (Methylobacterium sp. (strain 4-46)).